The chain runs to 109 residues: Large ribosomal subunit protein uL24 (109 aa).

The protein belongs to the universal ribosomal protein uL24 family. As to quaternary structure, part of the 50S ribosomal subunit.

In terms of biological role, one of two assembly initiator proteins, it binds directly to the 5'-end of the 23S rRNA, where it nucleates assembly of the 50S subunit. One of the proteins that surrounds the polypeptide exit tunnel on the outside of the subunit. This is Large ribosomal subunit protein uL24 from Legionella pneumophila (strain Corby).